The primary structure comprises 304 residues: N-acetyl-D-glucosamine kinase (304 aa).

ATP-binding positions include 4-11 (GFDIGGTK) and 133-140 (GFGGGLIF). Positions 157, 178, 180, and 185 each coordinate Zn(2+).

Belongs to the ROK (NagC/XylR) family. NagK subfamily.

The catalysed reaction is N-acetyl-D-glucosamine + ATP = N-acetyl-D-glucosamine 6-phosphate + ADP + H(+). It functions in the pathway cell wall biogenesis; peptidoglycan recycling. In terms of biological role, catalyzes the phosphorylation of N-acetyl-D-glucosamine (GlcNAc) derived from cell-wall degradation, yielding GlcNAc-6-P. The chain is N-acetyl-D-glucosamine kinase from Pasteurella multocida (strain Pm70).